We begin with the raw amino-acid sequence, 257 residues long: Snake venom serine protease rhinocerase 4 (257 aa).

The signal sequence occupies residues Val1–Ala17. Residues Gln18 to Leu23 constitute a propeptide that is removed on maturation. In terms of domain architecture, Peptidase S1 spans Val24–Gly248. Disulfide bonds link Cys30–Cys162, Cys49–Cys65, Cys97–Cys255, Cys141–Cys209, Cys173–Cys188, and Cys199–Cys224. Asn43 carries N-linked (GlcNAc...) asparagine glycosylation. The active-site Charge relay system is His64. Residues Asn78 and Asn100 are each glycosylated (N-linked (GlcNAc...) asparagine). Asp109 serves as the catalytic Charge relay system. Ser203 functions as the Charge relay system in the catalytic mechanism. Asn250 carries N-linked (GlcNAc...) asparagine glycosylation.

Belongs to the peptidase S1 family. Snake venom subfamily. Expressed by the venom gland.

The protein localises to the secreted. Snake venom serine protease that may act in the hemostasis system of the prey. The polypeptide is Snake venom serine protease rhinocerase 4 (Bitis rhinoceros (West African gaboon viper)).